The sequence spans 344 residues: N-acetyl-gamma-glutamyl-phosphate reductase (344 aa).

Cys150 is a catalytic residue.

It belongs to the NAGSA dehydrogenase family. Type 1 subfamily.

The protein localises to the cytoplasm. It catalyses the reaction N-acetyl-L-glutamate 5-semialdehyde + phosphate + NADP(+) = N-acetyl-L-glutamyl 5-phosphate + NADPH + H(+). The protein operates within amino-acid biosynthesis; L-arginine biosynthesis; N(2)-acetyl-L-ornithine from L-glutamate: step 3/4. Functionally, catalyzes the NADPH-dependent reduction of N-acetyl-5-glutamyl phosphate to yield N-acetyl-L-glutamate 5-semialdehyde. This Pseudomonas paraeruginosa (strain DSM 24068 / PA7) (Pseudomonas aeruginosa (strain PA7)) protein is N-acetyl-gamma-glutamyl-phosphate reductase.